A 241-amino-acid polypeptide reads, in one-letter code: Proteasome subunit alpha (241 aa).

This sequence belongs to the peptidase T1A family. As to quaternary structure, the 20S proteasome core is composed of 14 alpha and 14 beta subunits that assemble into four stacked heptameric rings, resulting in a barrel-shaped structure. The two inner rings, each composed of seven catalytic beta subunits, are sandwiched by two outer rings, each composed of seven alpha subunits. The catalytic chamber with the active sites is on the inside of the barrel. Has a gated structure, the ends of the cylinder being occluded by the N-termini of the alpha-subunits. Is capped by the proteasome-associated ATPase, ARC.

It is found in the cytoplasm. It functions in the pathway protein degradation; proteasomal Pup-dependent pathway. The formation of the proteasomal ATPase ARC-20S proteasome complex, likely via the docking of the C-termini of ARC into the intersubunit pockets in the alpha-rings, may trigger opening of the gate for substrate entry. Interconversion between the open-gate and close-gate conformations leads to a dynamic regulation of the 20S proteasome proteolysis activity. Component of the proteasome core, a large protease complex with broad specificity involved in protein degradation. The protein is Proteasome subunit alpha of Frankia alni (strain DSM 45986 / CECT 9034 / ACN14a).